The chain runs to 552 residues: Elongator complex protein 3 (552 aa).

Positions 84-374 constitute a Radical SAM core domain; the sequence is RTASGIAVVA…YRVQRDIPMP (291 aa). 3 residues coordinate [4Fe-4S] cluster: Cys-101, Cys-111, and Cys-114. Residues Lys-166, 476 to 479, 499 to 501, and Tyr-532 contribute to the acetyl-CoA site; these read ELHV and FGM. Residues 398-552 form the N-acetyltransferase domain; that stretch reads TTCRDVRTRE…YMSKSIEENN (155 aa).

Belongs to the ELP3 family. As to quaternary structure, component of the elongator complex composed of Elp1, Elp2, Elp3, Elp4, Elp5 and Elp6. The elongator complex associates with and stabilizes microtubules; efficient interaction requires the full complex. The cofactor is [4Fe-4S] cluster.

It is found in the cytoplasm. The protein resides in the nucleus. Its subcellular location is the cytoskeleton. It localises to the spindle. The enzyme catalyses uridine(34) in tRNA + acetyl-CoA + S-adenosyl-L-methionine + H2O = 5-(carboxymethyl)uridine(34) in tRNA + 5'-deoxyadenosine + L-methionine + CoA + 2 H(+). It participates in tRNA modification; 5-methoxycarbonylmethyl-2-thiouridine-tRNA biosynthesis. Functionally, catalytic tRNA acetyltransferase subunit of the elongator complex, which is required for multiple tRNA modifications, including mcm5U (5-methoxycarbonylmethyl uridine), mcm5s2U (5-methoxycarbonylmethyl-2-thiouridine), and ncm5U (5-carbamoylmethyl uridine). In the elongator complex, acts as a tRNA uridine(34) acetyltransferase by mediating formation of carboxymethyluridine in the wobble base at position 34 in tRNAs. Binding by the elongator complex stabilizes microtubules and promotes their growth. This induces central spindle asymmetry, promoting polarized signaling endosome trafficking during asymmetric cell division and cell fate assignation of sensory organ precursor cells. Plays a role in the control of synaptic bouton expansion. Required for larval development. Involved in protein synthesis-dependent long-term memory formation, probably as part of the elongator complex. The sequence is that of Elongator complex protein 3 from Drosophila melanogaster (Fruit fly).